The sequence spans 244 residues: 1-(5-phosphoribosyl)-5-[(5-phosphoribosylamino)methylideneamino] imidazole-4-carboxamide isomerase (244 aa).

The active-site Proton acceptor is aspartate 11. Aspartate 132 (proton donor) is an active-site residue.

This sequence belongs to the HisA/HisF family.

The protein localises to the cytoplasm. The enzyme catalyses 1-(5-phospho-beta-D-ribosyl)-5-[(5-phospho-beta-D-ribosylamino)methylideneamino]imidazole-4-carboxamide = 5-[(5-phospho-1-deoxy-D-ribulos-1-ylimino)methylamino]-1-(5-phospho-beta-D-ribosyl)imidazole-4-carboxamide. It participates in amino-acid biosynthesis; L-histidine biosynthesis; L-histidine from 5-phospho-alpha-D-ribose 1-diphosphate: step 4/9. The chain is 1-(5-phosphoribosyl)-5-[(5-phosphoribosylamino)methylideneamino] imidazole-4-carboxamide isomerase from Sphingopyxis alaskensis (strain DSM 13593 / LMG 18877 / RB2256) (Sphingomonas alaskensis).